A 150-amino-acid polypeptide reads, in one-letter code: Transcriptional regulator MraZ (150 aa).

SpoVT-AbrB domains follow at residues 7–58 (KEQH…EPEI) and 87–130 (LDSV…SPEK).

Belongs to the MraZ family. As to quaternary structure, forms oligomers.

Its subcellular location is the cytoplasm. The protein localises to the nucleoid. The chain is Transcriptional regulator MraZ from Chlorobium phaeobacteroides (strain BS1).